The following is a 102-amino-acid chain: Large ribosomal subunit protein bL21 (102 aa).

This sequence belongs to the bacterial ribosomal protein bL21 family. As to quaternary structure, part of the 50S ribosomal subunit. Contacts protein L20.

Its function is as follows. This protein binds to 23S rRNA in the presence of protein L20. This is Large ribosomal subunit protein bL21 from Trichlorobacter lovleyi (strain ATCC BAA-1151 / DSM 17278 / SZ) (Geobacter lovleyi).